A 331-amino-acid polypeptide reads, in one-letter code: Ketol-acid reductoisomerase (NADP(+)) (331 aa).

In terms of domain architecture, KARI N-terminal Rossmann spans 2 to 182 (AQLFYDSDAD…GGTRAGILET (181 aa)). NADP(+)-binding positions include 25 to 28 (YGSQ), Ser51, Ser53, and 83 to 86 (DEFQ). His108 is a catalytic residue. Gly134 is a binding site for NADP(+). A KARI C-terminal knotted domain is found at 183 to 328 (NFKEETETDL…KGLRSMFSWL (146 aa)). Mg(2+) is bound by residues Asp191, Glu195, Glu227, and Glu231. Substrate is bound at residue Ser252.

This sequence belongs to the ketol-acid reductoisomerase family. Requires Mg(2+) as cofactor.

The enzyme catalyses (2R)-2,3-dihydroxy-3-methylbutanoate + NADP(+) = (2S)-2-acetolactate + NADPH + H(+). The catalysed reaction is (2R,3R)-2,3-dihydroxy-3-methylpentanoate + NADP(+) = (S)-2-ethyl-2-hydroxy-3-oxobutanoate + NADPH + H(+). The protein operates within amino-acid biosynthesis; L-isoleucine biosynthesis; L-isoleucine from 2-oxobutanoate: step 2/4. It participates in amino-acid biosynthesis; L-valine biosynthesis; L-valine from pyruvate: step 2/4. Functionally, involved in the biosynthesis of branched-chain amino acids (BCAA). Catalyzes an alkyl-migration followed by a ketol-acid reduction of (S)-2-acetolactate (S2AL) to yield (R)-2,3-dihydroxy-isovalerate. In the isomerase reaction, S2AL is rearranged via a Mg-dependent methyl migration to produce 3-hydroxy-3-methyl-2-ketobutyrate (HMKB). In the reductase reaction, this 2-ketoacid undergoes a metal-dependent reduction by NADPH to yield (R)-2,3-dihydroxy-isovalerate. The chain is Ketol-acid reductoisomerase (NADP(+)) from Synechococcus sp. (strain CC9311).